A 274-amino-acid chain; its full sequence is 2,3,4,5-tetrahydropyridine-2,6-dicarboxylate N-succinyltransferase (274 aa).

Substrate-binding residues include Arg104 and Asp141.

The protein belongs to the transferase hexapeptide repeat family. Homotrimer.

The protein resides in the cytoplasm. The enzyme catalyses (S)-2,3,4,5-tetrahydrodipicolinate + succinyl-CoA + H2O = (S)-2-succinylamino-6-oxoheptanedioate + CoA. The protein operates within amino-acid biosynthesis; L-lysine biosynthesis via DAP pathway; LL-2,6-diaminopimelate from (S)-tetrahydrodipicolinate (succinylase route): step 1/3. This Shewanella amazonensis (strain ATCC BAA-1098 / SB2B) protein is 2,3,4,5-tetrahydropyridine-2,6-dicarboxylate N-succinyltransferase.